The chain runs to 38 residues: MKVRASVKKMCRNCKIVRRHGHVRVICSVDPKHKQRQG.

Belongs to the bacterial ribosomal protein bL36 family.

This chain is Large ribosomal subunit protein bL36, found in Proteus mirabilis (strain HI4320).